The sequence spans 77 residues: Acyl carrier protein (77 aa).

Positions 1 to 76 (MADFEKIKSI…DVIKFIDKLK (76 aa)) constitute a Carrier domain. Position 36 is an O-(pantetheine 4'-phosphoryl)serine (S36).

It belongs to the acyl carrier protein (ACP) family. Post-translationally, 4'-phosphopantetheine is transferred from CoA to a specific serine of apo-ACP by AcpS. This modification is essential for activity because fatty acids are bound in thioester linkage to the sulfhydryl of the prosthetic group.

The protein resides in the cytoplasm. It functions in the pathway lipid metabolism; fatty acid biosynthesis. In terms of biological role, carrier of the growing fatty acid chain in fatty acid biosynthesis. The sequence is that of Acyl carrier protein from Leptospira biflexa serovar Patoc (strain Patoc 1 / Ames).